Consider the following 379-residue polypeptide: Homoserine O-succinyltransferase (379 aa).

One can recognise an AB hydrolase-1 domain in the interval 48 to 357 (NAVLICHALS…SAHGHDAFLM (310 aa)). Ser-154 functions as the Nucleophile in the catalytic mechanism. A substrate-binding site is contributed by Arg-224. Active-site residues include Asp-319 and His-352. Position 353 (Asp-353) interacts with substrate.

Belongs to the AB hydrolase superfamily. MetX family. As to quaternary structure, homodimer.

The protein localises to the cytoplasm. The enzyme catalyses L-homoserine + succinyl-CoA = O-succinyl-L-homoserine + CoA. It participates in amino-acid biosynthesis; L-methionine biosynthesis via de novo pathway; O-succinyl-L-homoserine from L-homoserine: step 1/1. Functionally, transfers a succinyl group from succinyl-CoA to L-homoserine, forming succinyl-L-homoserine. The polypeptide is Homoserine O-succinyltransferase (Neisseria meningitidis serogroup A / serotype 4A (strain DSM 15465 / Z2491)).